A 792-amino-acid polypeptide reads, in one-letter code: Ubiquitin carboxyl-terminal hydrolase 10 (792 aa).

Ala-2 carries the post-translational modification N-acetylalanine. The interval 2 to 99 is interaction with p53/TP53; sequence ALHNPQYIFG…ILGCTTSKKI (98 aa). Positions 6 to 21 are G3BP1-binding; it reads PQYIFGDFSPDEFNQF. Thr-24 carries the post-translational modification Phosphothreonine. Residues 126–164 form a disordered region; it reads SNAEAETLENDSGAGGLGQRERKKKKKRPPGYYSYLKDG. Phosphoserine is present on residues Ser-208 and Ser-223. Residues 300 to 309 show a composition bias toward basic and acidic residues; sequence DEGADLDPAK. The interval 300-323 is disordered; the sequence is DEGADLDPAKPESQSPPAESALSA. Ser-314 is subject to Phosphoserine. Position 330 is a phosphoserine; by ATM (Ser-330). The tract at residues 350 to 369 is disordered; sequence PMAYVETKCSPPVPSPLASE. A phosphoserine mark is found at Ser-359 and Ser-364. The region spanning 409–789 is the USP domain; that stretch reads RGLINKGNWC…TAYLLYYRRV (381 aa). The active-site Nucleophile is the Cys-418. Residue Ser-541 is modified to Phosphoserine. Residues 542–580 form a disordered region; that stretch reads PTHEKHSVSNGPRSDLIEDEELEDTGKGSEDEWEQVGPK. Thr-566 is modified (phosphothreonine). Ser-570 bears the Phosphoserine mark. The active-site Proton acceptor is His-743.

Belongs to the peptidase C19 family. USP10 subfamily. Found in a deubiquitination complex with TANK, USP10 and ZC3H12A; this complex inhibits genotoxic stress- or interleukin-1-beta (IL1B)-mediated NF-kappa-B activation by promoting IKBKG or TRAF6 deubiquitination. Interacts with IKBKG; this interaction increases in response to DNA damage. Interacts with TANK; this interaction increases in response to DNA damage. Interacts with TRAF6; this interaction increases in response to DNA damage. Interacts with ZC3H12A; this interaction increases in response to DNA damage. Interacts with G3BP1 (via NTF2 domain) and G3BP2 (via NTF2 domain); inhibiting stress granule formation. Post-translationally, phosphorylated by ATM following DNA damage, leading to stabilization and translocation it to the nucleus. In terms of processing, ubiquitinated. Deubiquitinated by USP13.

It is found in the cytoplasm. The protein resides in the nucleus. The protein localises to the early endosome. It catalyses the reaction Thiol-dependent hydrolysis of ester, thioester, amide, peptide and isopeptide bonds formed by the C-terminal Gly of ubiquitin (a 76-residue protein attached to proteins as an intracellular targeting signal).. Specifically inhibited by spautin-1 (specific and potent autophagy inhibitor-1), a derivative of MBCQ that binds to USP10 and inhibits deubiquitinase activity. Regulated by PIK3C3/VPS34-containing complexes. Its function is as follows. Hydrolase that can remove conjugated ubiquitin from target proteins such as p53/TP53, RPS2/us5, RPS3/us3, RPS10/eS10, BECN1, SNX3 and CFTR. Acts as an essential regulator of p53/TP53 stability: in unstressed cells, specifically deubiquitinates p53/TP53 in the cytoplasm, leading to counteract MDM2 action and stabilize p53/TP53. Following DNA damage, translocates to the nucleus and deubiquitinates p53/TP53, leading to regulate the p53/TP53-dependent DNA damage response. Component of a regulatory loop that controls autophagy and p53/TP53 levels: mediates deubiquitination of BECN1, a key regulator of autophagy, leading to stabilize the PIK3C3/VPS34-containing complexes. In turn, PIK3C3/VPS34-containing complexes regulate USP10 stability, suggesting the existence of a regulatory system by which PIK3C3/VPS34-containing complexes regulate p53/TP53 protein levels via USP10 and USP13. Does not deubiquitinate MDM2. Plays a key role in 40S ribosome subunit recycling when a ribosome has stalled during translation: acts both by inhibiting formation of stress granules, which store stalled translation pre-initiation complexes, and mediating deubiquitination of 40S ribosome subunits. Acts as a negative regulator of stress granules formation by lowering G3BP1 and G3BP2 valence, thereby preventing G3BP1 and G3BP2 ability to undergo liquid-liquid phase separation (LLPS) and assembly of stress granules. Promotes 40S ribosome subunit recycling following ribosome dissociation in response to ribosome stalling by mediating deubiquitination of 40S ribosomal proteins RPS2/us5, RPS3/us3 and RPS10/eS10, thereby preventing their degradation by the proteasome. Part of a ribosome quality control that takes place when ribosomes have stalled during translation initiation (iRQC): USP10 acts by removing monoubiquitination of RPS2/us5 and RPS3/us3, promoting 40S ribosomal subunit recycling. Deubiquitinates CFTR in early endosomes, enhancing its endocytic recycling. Involved in a TANK-dependent negative feedback response to attenuate NF-kappa-B activation via deubiquitinating IKBKG or TRAF6 in response to interleukin-1-beta (IL1B) stimulation or upon DNA damage. Deubiquitinates TBX21 leading to its stabilization. Plays a negative role in the RLR signaling pathway upon RNA virus infection by blocking the RIGI-mediated MAVS activation. Mechanistically, removes the unanchored 'Lys-63'-linked polyubiquitin chains of MAVS to inhibit its aggregation, essential for its activation. This Mus musculus (Mouse) protein is Ubiquitin carboxyl-terminal hydrolase 10 (Usp10).